Here is a 565-residue protein sequence, read N- to C-terminus: Amino-acid acetyltransferase, mitochondrial (565 aa).

A disordered region spans residues 38-58; that stretch reads DIATATPAATPSDGAQPPAQN. The 189-residue stretch at 352-540 folds into the N-acetyltransferase domain; sequence LPVRVLRSME…EFGGGRLVRV (189 aa).

It belongs to the acetyltransferase family.

It is found in the mitochondrion. It carries out the reaction L-glutamate + acetyl-CoA = N-acetyl-L-glutamate + CoA + H(+). Its pathway is amino-acid biosynthesis; L-arginine biosynthesis; N(2)-acetyl-L-ornithine from L-glutamate: step 1/4. Its function is as follows. N-acetylglutamate synthase involved in arginine biosynthesis. This Cryptococcus neoformans var. neoformans serotype D (strain B-3501A) (Filobasidiella neoformans) protein is Amino-acid acetyltransferase, mitochondrial (ARG2).